The following is a 321-amino-acid chain: Biotin synthase (321 aa).

In terms of domain architecture, Radical SAM core spans 44-273; the sequence is FCGNVFDLCT…DGFVRIAAGR (230 aa). Cys62, Cys66, and Cys69 together coordinate [4Fe-4S] cluster. Ser106, Cys138, Cys198, and Arg268 together coordinate [2Fe-2S] cluster.

It belongs to the radical SAM superfamily. Biotin synthase family. In terms of assembly, homodimer. [4Fe-4S] cluster serves as cofactor. It depends on [2Fe-2S] cluster as a cofactor.

It carries out the reaction (4R,5S)-dethiobiotin + (sulfur carrier)-SH + 2 reduced [2Fe-2S]-[ferredoxin] + 2 S-adenosyl-L-methionine = (sulfur carrier)-H + biotin + 2 5'-deoxyadenosine + 2 L-methionine + 2 oxidized [2Fe-2S]-[ferredoxin]. The protein operates within cofactor biosynthesis; biotin biosynthesis; biotin from 7,8-diaminononanoate: step 2/2. Functionally, catalyzes the conversion of dethiobiotin (DTB) to biotin by the insertion of a sulfur atom into dethiobiotin via a radical-based mechanism. The protein is Biotin synthase of Akkermansia muciniphila (strain ATCC BAA-835 / DSM 22959 / JCM 33894 / BCRC 81048 / CCUG 64013 / CIP 107961 / Muc).